The chain runs to 306 residues: Recombination-associated protein RdgC (306 aa).

It belongs to the RdgC family.

It localises to the cytoplasm. It is found in the nucleoid. Functionally, may be involved in recombination. The protein is Recombination-associated protein RdgC of Pseudomonas putida (strain GB-1).